A 274-amino-acid chain; its full sequence is Penicillin-insensitive murein endopeptidase (274 aa).

An N-terminal signal peptide occupies residues 1–19 (MKKTAIALLAWFVSSASLA). 3 disulfide bridges follow: Cys44–Cys265, Cys187–Cys235, and Cys216–Cys223. Zn(2+) is bound by residues His110, His113, Asp120, Asp147, His150, and His211. Positions 225–274 (DQPLPPPGDGCGAELQSWFEPPKPGTTKPEKKTPPPLPPSCQALLDEHVL) are disordered.

This sequence belongs to the peptidase M74 family. Dimer. The cofactor is Zn(2+).

It localises to the periplasm. Murein endopeptidase that cleaves the D-alanyl-meso-2,6-diamino-pimelyl amide bond that connects peptidoglycan strands. Likely plays a role in the removal of murein from the sacculus. The polypeptide is Penicillin-insensitive murein endopeptidase (Salmonella arizonae (strain ATCC BAA-731 / CDC346-86 / RSK2980)).